A 594-amino-acid polypeptide reads, in one-letter code: Nucleolar protein 56 (594 aa).

Glycyl lysine isopeptide (Lys-Gly) (interchain with G-Cter in SUMO2) cross-links involve residues Lys87, Lys230, and Lys240. Residues 292–410 enclose the Nop domain; the sequence is VAPSLSALIG…VEERLSFYET (119 aa). Ser314 bears the Phosphoserine mark. Position 359 is an omega-N-methylarginine (Arg359). Composition is skewed to low complexity over residues 458–469 and 488–504; these read ALASSENSSSTP and QEVPQENGMEDPSISFS. The segment at 458–594 is disordered; sequence ALASSENSSS…KKFHKASQED (137 aa). Phosphoserine occurs at positions 466 and 467. Position 468 is a phosphothreonine (Thr468). Phosphoserine is present on residues Ser511, Ser519, Ser520, and Ser537. Residue Lys540 forms a Glycyl lysine isopeptide (Lys-Gly) (interchain with G-Cter in SUMO2) linkage. Position 561 is an N6-acetyllysine (Lys561). A Phosphoserine modification is found at Ser563. Lys564 is covalently cross-linked (Glycyl lysine isopeptide (Lys-Gly) (interchain with G-Cter in SUMO2)). 4 positions are modified to phosphoserine: Ser569, Ser570, Ser579, and Ser581. Positions 580–594 are enriched in basic residues; that stretch reads SSKKKKKFHKASQED.

The protein belongs to the NOP5/NOP56 family. In terms of assembly, part of a large pre-ribosomal ribonucleoprotein (RNP) complex, that consists of at least 62 ribosomal proteins, 45 nonribosomal proteins and both pre-rRNA and mature rRNA species. Within this complex directly interacts with TCOF1 in an RNA-independent manner. Core component of box C/D small nucleolar ribonucleoprotein (snoRNP) particles; the core proteins SNU13, NOP56, NOP58 and FBL or FBLL1 assemble stepwise onto the snoRNA. Interacts with NOP1 and NOP58. Interacts with NUFIP1, RUVBL1 and RUVBL2; RUVBL1:RUVBL2 seem to bridge the association of NOP56 with NUFIP1. Part of the small subunit (SSU) processome, composed of more than 70 proteins and the RNA chaperone small nucleolar RNA (snoRNA) U3. Interacts with NOP2 and FBL.

The protein localises to the nucleus. It localises to the nucleolus. It is found in the cytoplasm. Its subcellular location is the nucleoplasm. Functionally, involved in the early to middle stages of 60S ribosomal subunit biogenesis. Required for the biogenesis of box C/D snoRNAs such U3, U8 and U14 snoRNAs. Part of the small subunit (SSU) processome, first precursor of the small eukaryotic ribosomal subunit. During the assembly of the SSU processome in the nucleolus, many ribosome biogenesis factors, an RNA chaperone and ribosomal proteins associate with the nascent pre-rRNA and work in concert to generate RNA folding, modifications, rearrangements and cleavage as well as targeted degradation of pre-ribosomal RNA by the RNA exosome. Core component of box C/D small nucleolar ribonucleoprotein (snoRNP) complexes that function in methylation of multiple sites on ribosomal RNAs (rRNAs) and messenger RNAs (mRNAs). This Homo sapiens (Human) protein is Nucleolar protein 56.